The following is a 130-amino-acid chain: Small ribosomal subunit protein uS11c (130 aa).

It belongs to the universal ribosomal protein uS11 family. Part of the 30S ribosomal subunit.

Its subcellular location is the plastid. It is found in the cyanelle. In Cyanophora paradoxa, this protein is Small ribosomal subunit protein uS11c.